Consider the following 247-residue polypeptide: Reticulon-like protein B8 (247 aa).

The Reticulon domain maps to 61-247 (SADVLLWRNK…SGKFGLKKRE (187 aa)). Helical transmembrane passes span 71-91 (KISASVLMGATAIWVLFEWIN), 92-112 (FHFLSLVCYALLLGMIAQFVW), and 166-186 (FLMAVIGLWVAAMVGSCCNFL).

It localises to the endoplasmic reticulum membrane. This is Reticulon-like protein B8 (RTNLB8) from Arabidopsis thaliana (Mouse-ear cress).